A 261-amino-acid polypeptide reads, in one-letter code: Transmembrane and immunoglobulin domain-containing protein 1 (261 aa).

The N-terminal stretch at 1 to 26 (MVWKITGPLQACQLLLVVLSLPQGRT) is a signal peptide. The region spanning 27-113 (SSVLTVNGRT…LQRDQTVSVT (87 aa)) is the Ig-like C2-type 1 domain. The Extracellular segment spans residues 27 to 215 (SSVLTVNGRT…DFHLLVKDKV (189 aa)). Cys53 and Cys102 form a disulfide bridge. Residues Asn57, Asn82, Asn92, Asn117, Asn157, and Asn189 are each glycosylated (N-linked (GlcNAc...) asparagine). One can recognise an Ig-like C2-type 2 domain in the interval 121-206 (PPLLSGNGFQ…SSSLKMETMD (86 aa)). A disulfide bridge connects residues Cys142 and Cys194. Residues 216–236 (FVMPAEPIIAACVVVVLTMAF) form a helical membrane-spanning segment. Residues 237 to 261 (ALFSRRKRIMKLCGKKNDPNSETAL) are Cytoplasmic-facing.

Homodimer. In terms of processing, N-glycosylated.

The protein localises to the cell membrane. It is found in the cytoplasm. Its function is as follows. May control cell-cell adhesion, cell migration and proliferation, cell morphology, and protects renal epithelial cells from oxidative cell injury to promote cell survival. In Mus musculus (Mouse), this protein is Transmembrane and immunoglobulin domain-containing protein 1.